Here is a 213-residue protein sequence, read N- to C-terminus: Probable GTP-binding protein EngB (213 aa).

One can recognise an EngB-type G domain in the interval 30-204 (EGFEVAFAGR…YTALAGWMEL (175 aa)). GTP is bound by residues 38 to 45 (GRSNAGKS), 64 to 68 (GRTQL), 82 to 85 (DLPG), 149 to 152 (TKAD), and 182 to 185 (LFSA). Mg(2+)-binding residues include serine 45 and threonine 66.

It belongs to the TRAFAC class TrmE-Era-EngA-EngB-Septin-like GTPase superfamily. EngB GTPase family. Requires Mg(2+) as cofactor.

In terms of biological role, necessary for normal cell division and for the maintenance of normal septation. This is Probable GTP-binding protein EngB from Pseudomonas fluorescens (strain SBW25).